Reading from the N-terminus, the 195-residue chain is Dihydroneopterin triphosphate diphosphatase (195 aa).

Aspartate 73 (proton acceptor) is an active-site residue.

This sequence belongs to the HAM1 NTPase family. It depends on Mn(2+) as a cofactor.

The enzyme catalyses 7,8-dihydroneopterin 3'-triphosphate + H2O = 7,8-dihydroneopterin 3'-phosphate + diphosphate + H(+). It participates in cofactor biosynthesis; tetrahydrofolate biosynthesis. In terms of biological role, pyrophosphatase involved in the biosynthesis of tetrahydrofolate. Catalyzes the hydrolysis of dihydroneopterin triphosphate (DHNTP) to dihydroneopterin monophosphate (DHNMP) and pyrophosphate. Shows a strict substrate specificity. Has only weak activity with GTP, ITP, XTP and dTTP, and cannot use ATP, UTP, CTP, NAD(+), NADH, diadenosine triphosphate, diadenosine tetraphosphate, ADP-ribose and UDP-glucose. This is Dihydroneopterin triphosphate diphosphatase from Limosilactobacillus reuteri (strain DSM 20016) (Lactobacillus reuteri).